The chain runs to 337 residues: Glyceraldehyde-3-phosphate dehydrogenase (337 aa).

NAD(+)-binding positions include 12–13 (RI), aspartate 34, and lysine 79. D-glyceraldehyde 3-phosphate-binding positions include 150–152 (SCT), threonine 181, 210–211 (TG), and arginine 233. Cysteine 151 (nucleophile) is an active-site residue. NAD(+) is bound at residue asparagine 315.

The protein belongs to the glyceraldehyde-3-phosphate dehydrogenase family. Homotetramer.

It is found in the cytoplasm. The enzyme catalyses D-glyceraldehyde 3-phosphate + phosphate + NAD(+) = (2R)-3-phospho-glyceroyl phosphate + NADH + H(+). It participates in carbohydrate degradation; glycolysis; pyruvate from D-glyceraldehyde 3-phosphate: step 1/5. This chain is Glyceraldehyde-3-phosphate dehydrogenase (GPD), found in Phanerodontia chrysosporium (White-rot fungus).